Here is a 298-residue protein sequence, read N- to C-terminus: Riboflavin transporter (298 aa).

A run of 9 helical transmembrane segments spans residues 8-28, 35-55, 79-99, 101-121, 125-145, 151-171, 184-204, 211-231, and 258-278; these read LQGA…NSVA, FGLP…VVIL, VFLA…PVPI, QGIA…GLWL, VGMA…IILE, FNLA…YSLM, MVVY…LPDW, TVWL…WAIA, and WLVF…IIVL. 2 consecutive EamA domains span residues 10–144 and 156–284; these read GALW…MIIL and LLPV…AFIT.

It belongs to the drug/metabolite transporter (DMT) superfamily. 10 TMS drug/metabolite exporter (DME) (TC 2.A.7.3) family.

Its subcellular location is the cell membrane. Transports riboflavin into the cell. The polypeptide is Riboflavin transporter (Vibrio cholerae serotype O1 (strain ATCC 39315 / El Tor Inaba N16961)).